The sequence spans 191 residues: INO80 complex subunit C (191 aa).

Residues 1 to 41 (MAAQIPIVAATSTPTVARNSKKRPASPSHNSSGGGYGASKK) are disordered.

Component of the chromatin remodeling INO80 complex; specifically part of a complex module associated with the helicase ATP-binding and the helicase C-terminal domain of INO80. Component of some MLL1/MLL complex, at least composed of the core components KMT2A/MLL1, ASH2L, HCFC1/HCF1, WDR5 and RBBP5, as well as the facultative components BACC1, CHD8, E2F6, HSP70, INO80C, KANSL1, LAS1L, MAX, MCRS1, MGA, MYST1/MOF, PELP1, PHF20, PRP31, RING2, RUVB1/TIP49A, RUVB2/TIP49B, SENP3, TAF1, TAF4, TAF6, TAF7, TAF9 and TEX10.

It localises to the nucleus. Proposed core component of the chromatin remodeling INO80 complex which is involved in transcriptional regulation, DNA replication and probably DNA repair. The protein is INO80 complex subunit C (Ino80c) of Rattus norvegicus (Rat).